Consider the following 250-residue polypeptide: Electron transport regulator A (250 aa).

The 74-residue stretch at 164–237 (KNAEERLAAF…GKYIIIVDHH (74 aa)) folds into the HTH crp-type domain. A DNA-binding region (H-T-H motif) is located at residues 197-216 (RGDIGNYLGLTVETISRLLG).

In terms of assembly, monomer.

In terms of biological role, regulates anaerobic growth on fumarate, nitrite, Fe(3+), TMAO, DMSO, thiosulfate and sulfite, but not on nitrate nor Mn(4+). This is Electron transport regulator A (etrA) from Shewanella oneidensis (strain ATCC 700550 / JCM 31522 / CIP 106686 / LMG 19005 / NCIMB 14063 / MR-1).